Reading from the N-terminus, the 990-residue chain is Mediator of RNA polymerase II transcription subunit 5 (990 aa).

Belongs to the Mediator complex subunit 5 family. As to quaternary structure, component of the Mediator complex.

The protein localises to the nucleus. Its function is as follows. Component of the Mediator complex, a coactivator involved in the regulated transcription of nearly all RNA polymerase II-dependent genes. Mediator functions as a bridge to convey information from gene-specific regulatory proteins to the basal RNA polymerase II transcription machinery. Mediator is recruited to promoters by direct interactions with regulatory proteins and serves as a scaffold for the assembly of a functional preinitiation complex with RNA polymerase II and the general transcription factors. The polypeptide is Mediator of RNA polymerase II transcription subunit 5 (NUT1) (Debaryomyces hansenii (strain ATCC 36239 / CBS 767 / BCRC 21394 / JCM 1990 / NBRC 0083 / IGC 2968) (Yeast)).